The chain runs to 272 residues: Insulin-like growth factor-binding protein 1 (272 aa).

An N-terminal signal peptide occupies residues 1-25 (MPEFLTVVSWPFLILLSFQIGVAAG). An IGFBP N-terminal domain is found at 28–109 (QPWHCAPCTA…TRGQGACVPE (82 aa)). Disulfide bonds link Cys32-Cys59, Cys35-Cys61, Cys43-Cys62, Cys50-Cys65, Cys73-Cys86, and Cys80-Cys106. A phosphoserine mark is found at Ser139, Ser157, and Ser169. Residue Thr170 is modified to Phosphothreonine. Residue Tyr171 is modified to Phosphotyrosine. One can recognise a Thyroglobulin type-1 domain in the interval 186–264 (KEPCQRELYK…SLETRGDPNC (79 aa)). Intrachain disulfides connect Cys189–Cys219, Cys230–Cys241, and Cys243–Cys264. Residue Ser255 is modified to Phosphoserine. Positions 259-261 (RGD) match the Cell attachment site motif.

Binds equally well IGF1 and IGF2. Interacts with integrin ITGA5:ITGB1. Interacts with VHL; this interaction inhibits HIF1A degradation.

The protein localises to the secreted. Functionally, multifunctional protein that plays a critical role in regulating the availability of IGFs such as IGF1 and IGF2 to their receptors and thereby regulates IGF-mediated cellular processes including cell migration, proliferation, differentiation or apoptosis in a cell-type specific manner. Also plays a positive role in cell migration by interacting with integrin ITGA5:ITGB1 through its RGD motif. Mechanistically, binding to integrins leads to activation of focal adhesion kinase/PTK2 and stimulation of the mitogen-activated protein kinase (MAPK) pathway. Regulates cardiomyocyte apoptosis by suppressing HIF-1alpha/HIF1A ubiquitination and subsequent degradation. In Mus musculus (Mouse), this protein is Insulin-like growth factor-binding protein 1 (Igfbp1).